A 291-amino-acid chain; its full sequence is Formamidopyrimidine-DNA glycosylase (291 aa).

Residue Pro-2 is the Schiff-base intermediate with DNA of the active site. The Proton donor role is filled by Glu-3. Lys-60 serves as the catalytic Proton donor; for beta-elimination activity. DNA contacts are provided by His-108 and Arg-127. The FPG-type zinc-finger motif lies at 257-291 (WVYRRGGQACRICSTPIRRESLCGRGTHWCPNCQR). Arg-281 functions as the Proton donor; for delta-elimination activity in the catalytic mechanism.

Belongs to the FPG family. As to quaternary structure, monomer. Requires Zn(2+) as cofactor.

It catalyses the reaction Hydrolysis of DNA containing ring-opened 7-methylguanine residues, releasing 2,6-diamino-4-hydroxy-5-(N-methyl)formamidopyrimidine.. It carries out the reaction 2'-deoxyribonucleotide-(2'-deoxyribose 5'-phosphate)-2'-deoxyribonucleotide-DNA = a 3'-end 2'-deoxyribonucleotide-(2,3-dehydro-2,3-deoxyribose 5'-phosphate)-DNA + a 5'-end 5'-phospho-2'-deoxyribonucleoside-DNA + H(+). In terms of biological role, involved in base excision repair of DNA damaged by oxidation or by mutagenic agents. Acts as a DNA glycosylase that recognizes and removes damaged bases. Has a preference for oxidized purines, such as 7,8-dihydro-8-oxoguanine (8-oxoG). Has AP (apurinic/apyrimidinic) lyase activity and introduces nicks in the DNA strand. Cleaves the DNA backbone by beta-delta elimination to generate a single-strand break at the site of the removed base with both 3'- and 5'-phosphates. This chain is Formamidopyrimidine-DNA glycosylase, found in Prochlorococcus marinus (strain MIT 9313).